The chain runs to 155 residues: Large ribosomal subunit protein uL30 (155 aa).

The protein belongs to the universal ribosomal protein uL30 family. In terms of assembly, part of the 50S ribosomal subunit.

The chain is Large ribosomal subunit protein uL30 from Pyrococcus horikoshii (strain ATCC 700860 / DSM 12428 / JCM 9974 / NBRC 100139 / OT-3).